Reading from the N-terminus, the 314-residue chain is Acetaldehyde dehydrogenase 4 (314 aa).

15 to 18 (SGNI) is an NAD(+) binding site. Cys-133 serves as the catalytic Acyl-thioester intermediate. NAD(+)-binding positions include 164 to 172 (SAGPGTRAN) and Asn-292.

Belongs to the acetaldehyde dehydrogenase family.

It carries out the reaction acetaldehyde + NAD(+) + CoA = acetyl-CoA + NADH + H(+). In Burkholderia lata (strain ATCC 17760 / DSM 23089 / LMG 22485 / NCIMB 9086 / R18194 / 383), this protein is Acetaldehyde dehydrogenase 4.